The following is a 336-amino-acid chain: Holliday junction branch migration complex subunit RuvB (336 aa).

The tract at residues 4 to 184 (ADRLIQPQVQ…FGIPLRLEFY (181 aa)) is large ATPase domain (RuvB-L). ATP-binding positions include Arg-24, Gly-65, Lys-68, Thr-69, Thr-70, 131 to 133 (EDY), Arg-174, Tyr-184, and Arg-221. Thr-69 is a binding site for Mg(2+). The segment at 185–255 (NVADLTTIVT…VAEYALDLLD (71 aa)) is small ATPAse domain (RuvB-S). The tract at residues 258-336 (DQGFDYLDRK…HFSLVRPEKA (79 aa)) is head domain (RuvB-H). The DNA site is built by Arg-294, Arg-313, and Arg-318.

Belongs to the RuvB family. Homohexamer. Forms an RuvA(8)-RuvB(12)-Holliday junction (HJ) complex. HJ DNA is sandwiched between 2 RuvA tetramers; dsDNA enters through RuvA and exits via RuvB. An RuvB hexamer assembles on each DNA strand where it exits the tetramer. Each RuvB hexamer is contacted by two RuvA subunits (via domain III) on 2 adjacent RuvB subunits; this complex drives branch migration. In the full resolvosome a probable DNA-RuvA(4)-RuvB(12)-RuvC(2) complex forms which resolves the HJ.

It localises to the cytoplasm. The enzyme catalyses ATP + H2O = ADP + phosphate + H(+). In terms of biological role, the RuvA-RuvB-RuvC complex processes Holliday junction (HJ) DNA during genetic recombination and DNA repair, while the RuvA-RuvB complex plays an important role in the rescue of blocked DNA replication forks via replication fork reversal (RFR). RuvA specifically binds to HJ cruciform DNA, conferring on it an open structure. The RuvB hexamer acts as an ATP-dependent pump, pulling dsDNA into and through the RuvAB complex. RuvB forms 2 homohexamers on either side of HJ DNA bound by 1 or 2 RuvA tetramers; 4 subunits per hexamer contact DNA at a time. Coordinated motions by a converter formed by DNA-disengaged RuvB subunits stimulates ATP hydrolysis and nucleotide exchange. Immobilization of the converter enables RuvB to convert the ATP-contained energy into a lever motion, pulling 2 nucleotides of DNA out of the RuvA tetramer per ATP hydrolyzed, thus driving DNA branch migration. The RuvB motors rotate together with the DNA substrate, which together with the progressing nucleotide cycle form the mechanistic basis for DNA recombination by continuous HJ branch migration. Branch migration allows RuvC to scan DNA until it finds its consensus sequence, where it cleaves and resolves cruciform DNA. This Shewanella frigidimarina (strain NCIMB 400) protein is Holliday junction branch migration complex subunit RuvB.